The sequence spans 869 residues: Probable beta-glucosidase F (869 aa).

An N-terminal signal peptide occupies residues 1–19 (MRVLSAIALVASLASSALS). Residues N77 and N261 are each glycosylated (N-linked (GlcNAc...) asparagine). Residue D289 is part of the active site. N-linked (GlcNAc...) asparagine glycosylation is found at N332, N364, N399, and N478. The interval 677–697 (STYPPTRPPKGPTPTYPTAIP) is disordered. The span at 681–691 (PTRPPKGPTPT) shows a compositional bias: pro residues. N728 carries N-linked (GlcNAc...) asparagine glycosylation.

It belongs to the glycosyl hydrolase 3 family.

It is found in the secreted. It carries out the reaction Hydrolysis of terminal, non-reducing beta-D-glucosyl residues with release of beta-D-glucose.. It functions in the pathway glycan metabolism; cellulose degradation. Beta-glucosidases are one of a number of cellulolytic enzymes involved in the degradation of cellulosic biomass. Catalyzes the last step releasing glucose from the inhibitory cellobiose. The chain is Probable beta-glucosidase F (bglF) from Aspergillus fumigatus (strain ATCC MYA-4609 / CBS 101355 / FGSC A1100 / Af293) (Neosartorya fumigata).